The following is a 489-amino-acid chain: MPSPTKAAEAATKATATSDCSCSAASVEERGPVNAANPSSTXATSGKIGGKTQDQTAAINKPKEFAVPNETSDSGFISGPQSSQICSEEIVPDSEEQDKNQQQSAPQKEQPVVLDSGIIDEEEEHQDTTTATADSMRLKHSADTGIPQWTVESHLVNRGEQLNNLGQSSSTQITGRSKFQSSTASTANANPSGXGATSSAPPSSINIXNAWEQFYQQNDDGDTPXHLACISGSVEVVAALIRMAPHPCLLNIQNDVAQTPLHLAALTAQPNIMRILLLAGAEVRDRHGNTALHLSCIAGEKQCVRALTEEFGATEIHEAHRQYGHRSNDKAVSSLSFARLPADLEIRNYDGERCVHLAAEAGHIDILRILVSHGADINAREGKSGRTPLHIAIEGCNEDLANFLLDECEKLNLETATYAGLTAYQFACIMNKSRMQNILEKRGAETVTPPDSDYDSSDIEDLDDTKMYDRFGDPRYFVSYNGGNPMTVA.

A compositionally biased stretch (low complexity) spans 1–26 (MPSPTKAAEAATKATATSDCSCSAAS). 2 disordered regions span residues 1-138 (MPSP…SMRL) and 163-203 (NNLG…APPS). Residue Ser45 is modified to Phosphoserine; by PKC. Positions 69 to 86 (NETSDSGFISGPQSSQIC) are enriched in polar residues. A Phosphoserine; by PKC modification is found at Ser135. A compositionally biased stretch (polar residues) spans 163–180 (NNLGQSSSTQITGRSKFQ). Thr174 is subject to Phosphothreonine; by PKC. Low complexity predominate over residues 181–203 (SSTASTANANPSGXGATSSAPPS). ANK repeat units follow at residues 220–252 (DGDT…LLNI), 256–285 (VAQT…EVRD), 287–316 (HGNT…ATEI), 350–379 (DGER…DINA), and 384–413 (SGRT…KLNL). At Thr308 the chain carries Phosphothreonine; by PKC. At Ser384 the chain carries Phosphoserine; by PKC.

It localises to the cytoplasm. Involved in the formation of the dorsoventral pattern. It inhibits nuclear translocation of the dorsal morphogen in the dorsal region of the embryo. The protein is NF-kappa-B inhibitor cactus (cact) of Drosophila yakuba (Fruit fly).